We begin with the raw amino-acid sequence, 328 residues long: Probable cell division protein WhiA (328 aa).

A DNA-binding region (H-T-H motif) is located at residues 275–308; it reads SLEELGRLAEPPMTKDAVAGRIRRLLSMADKRAE.

The protein belongs to the WhiA family.

Its function is as follows. Involved in cell division and chromosome segregation. The polypeptide is Probable cell division protein WhiA (Corynebacterium jeikeium (strain K411)).